A 210-amino-acid chain; its full sequence is Thymidylate kinase (210 aa).

10-17 is an ATP binding site; that stretch reads GIDGCGKT.

This sequence belongs to the thymidylate kinase family.

It carries out the reaction dTMP + ATP = dTDP + ADP. Phosphorylation of dTMP to form dTDP in both de novo and salvage pathways of dTTP synthesis. The protein is Thymidylate kinase of Prochlorococcus marinus (strain MIT 9515).